We begin with the raw amino-acid sequence, 58 residues long: U8-ctenitoxin-Pr1a (58 aa).

5 disulfides stabilise this stretch: Cys2-Cys16, Cys9-Cys22, Cys15-Cys40, Cys24-Cys38, and Cys48-Cys55.

As to expression, expressed by the venom gland.

The protein localises to the secreted. Its function is as follows. No toxic effects on mice at dose levels of 5 ug per mouse. May be toxic to insects. The sequence is that of U8-ctenitoxin-Pr1a from Phoneutria reidyi (Brazilian Amazonian armed spider).